Here is a 605-residue protein sequence, read N- to C-terminus: DNA primase (605 aa).

The segment at 38 to 62 (CPFHDEKTPSFTVSEDKQICHCFGC) adopts a CHC2-type zinc-finger fold. Residues 260–341 (DEIVLLEGFM…NVFVIQLPSG (82 aa)) enclose the Toprim domain. The Mg(2+) site is built by Glu-266, Asp-310, and Asp-312.

This sequence belongs to the DnaG primase family. In terms of assembly, monomer. Interacts with DnaB. It depends on Zn(2+) as a cofactor. Mg(2+) serves as cofactor.

The catalysed reaction is ssDNA + n NTP = ssDNA/pppN(pN)n-1 hybrid + (n-1) diphosphate.. Functionally, RNA polymerase that catalyzes the synthesis of short RNA molecules used as primers for DNA polymerase during DNA replication. The protein is DNA primase of Staphylococcus aureus.